The sequence spans 241 residues: Ubiquinone biosynthesis O-methyltransferase (241 aa).

4 residues coordinate S-adenosyl-L-methionine: arginine 46, glycine 66, aspartate 87, and methionine 131.

The protein belongs to the methyltransferase superfamily. UbiG/COQ3 family.

It carries out the reaction a 3-demethylubiquinol + S-adenosyl-L-methionine = a ubiquinol + S-adenosyl-L-homocysteine + H(+). The enzyme catalyses a 3-(all-trans-polyprenyl)benzene-1,2-diol + S-adenosyl-L-methionine = a 2-methoxy-6-(all-trans-polyprenyl)phenol + S-adenosyl-L-homocysteine + H(+). It functions in the pathway cofactor biosynthesis; ubiquinone biosynthesis. Functionally, O-methyltransferase that catalyzes the 2 O-methylation steps in the ubiquinone biosynthetic pathway. The polypeptide is Ubiquinone biosynthesis O-methyltransferase (Bordetella bronchiseptica (strain ATCC BAA-588 / NCTC 13252 / RB50) (Alcaligenes bronchisepticus)).